A 206-amino-acid chain; its full sequence is Large ribosomal subunit protein uL4 (206 aa).

The interval 46-77 (GTRAQKDREQVRHSTKKPFKQKGTGNARAGMT) is disordered.

It belongs to the universal ribosomal protein uL4 family. Part of the 50S ribosomal subunit.

In terms of biological role, one of the primary rRNA binding proteins, this protein initially binds near the 5'-end of the 23S rRNA. It is important during the early stages of 50S assembly. It makes multiple contacts with different domains of the 23S rRNA in the assembled 50S subunit and ribosome. Forms part of the polypeptide exit tunnel. The chain is Large ribosomal subunit protein uL4 from Paracidovorax citrulli (strain AAC00-1) (Acidovorax citrulli).